The sequence spans 438 residues: Lipoyl synthase, mitochondrial (438 aa).

The transit peptide at 1 to 31 (MAASARGLRTLQSAHSSTTVPRLQLAVSRCY) directs the protein to the mitochondrion. A compositionally biased stretch (low complexity) spans 34–57 (TTSPDPPITNSSNSSNSSNSTPTP). The interval 34–58 (TTSPDPPITNSSNSSNSSNSTPTPK) is disordered. [4Fe-4S] cluster-binding residues include Cys-148, Cys-153, Cys-159, Cys-179, Cys-183, Cys-186, and Ser-394. Residues 162–383 (GSSKSAATAT…KERALEMGFL (222 aa)) form the Radical SAM core domain.

This sequence belongs to the radical SAM superfamily. Lipoyl synthase family. [4Fe-4S] cluster is required as a cofactor.

Its subcellular location is the mitochondrion. The catalysed reaction is [[Fe-S] cluster scaffold protein carrying a second [4Fe-4S](2+) cluster] + N(6)-octanoyl-L-lysyl-[protein] + 2 oxidized [2Fe-2S]-[ferredoxin] + 2 S-adenosyl-L-methionine + 4 H(+) = [[Fe-S] cluster scaffold protein] + N(6)-[(R)-dihydrolipoyl]-L-lysyl-[protein] + 4 Fe(3+) + 2 hydrogen sulfide + 2 5'-deoxyadenosine + 2 L-methionine + 2 reduced [2Fe-2S]-[ferredoxin]. The protein operates within protein modification; protein lipoylation via endogenous pathway; protein N(6)-(lipoyl)lysine from octanoyl-[acyl-carrier-protein]: step 2/2. In terms of biological role, catalyzes the radical-mediated insertion of two sulfur atoms into the C-6 and C-8 positions of the octanoyl moiety bound to the lipoyl domains of lipoate-dependent enzymes, thereby converting the octanoylated domains into lipoylated derivatives. In Paracoccidioides brasiliensis (strain Pb18), this protein is Lipoyl synthase, mitochondrial.